We begin with the raw amino-acid sequence, 970 residues long: MSRSTRSKERRENDTDSEDNSSETSNQERRRCRQGPPRPPYPPLLPPVFPPPTPPPQVRRTRGLQDLGAMKSVCPGTSGFSSPNPSAASAAAQEVRSATDGNTSTTPPTSAKKRKLNSSSSSSNSSNEREDFDSTSSSSTPPQPRDSASPSTSSFCLGVPVATSSHVPIQKKLRFEDTLEFVGIDTKMAEESSSSSSSSSPTAATSQQQQQQQLKTKSILISSVASVHHANGLAKSSTAVSSFANSKPGSAKKLVIKNFKDKPKLPENYTDETWQKLKEAVEAIQNSTSIKYNLEELYQAVENLCSHKISANLYKQLRQICEDHIKAQIHQFREDSLDSVLFLKKIDRCWQNHCRQMIMIRSIFLFLDRTYVLQNSMLPSIWDMGLELFRAHIISDQKVQTKTIDGILLLIERERNGEAIDRSLLRSLLSMLSDLQIYQDSFEQQFLQETNRLYAAEGQKLMQEREVPEYLHHVNKRLEEEADRLITYLDQTTQKSLIASVEKQLLGEHLTAILQKGLNSLLDENRIQDLSLLYQLFSRVRGGVQVLLQQWIEYIKAFGSTIVINPEKDKTMVQELLDFKDKVDHIIDTCFLKNEKFINAMKEAFETFINKRPNKPAELIAKYVDSKLRAGNKEATDEELEKMLDKIMIIFRFIYGKDVFEAFYKKDLAKRLLVGKSASVDAEKSMLSKLKHECGAAFTSKLEGMFKDMELSKDIMIQFKQYMQNQNVPGNIELTVNILTMGYWPTYVPMEVHLPPEMVKLQEIFKTFYLGKHSGRKLQWQSTLGHCVLKAEFKEGKKELQVSLFQTMVLLMFNEGEEFSLEEIKHATGIEDGELRRTLQSLACGKARVLAKNPKGKDIEDGDKFICNDDFKHKLFRIKINQIQMKETVEEQASTTERVFQDRQYQIDAAIVRIMKMRKTLSHNLLVSEVYNQLKFPVKPADLKKRIESLIDRDYMERDKENPNQYNYIA.

Positions Met-1–Asp-14 are enriched in basic and acidic residues. 2 disordered regions span residues Met-1–Leu-157 and Ala-189–Gln-211. Thr-15 bears the Phosphothreonine mark. A Phosphoserine modification is found at Ser-17. Pro residues predominate over residues Pro-36–Gln-57. Residues Ser-78–Ala-98 are compositionally biased toward low complexity. Polar residues predominate over residues Thr-99–Thr-109. Thr-106 bears the Phosphothreonine mark. Ser-110 is subject to Phosphoserine. The Nuclear localization signal motif lies at Lys-112–Lys-115. Positions Asn-117–Ser-126 are enriched in low complexity. The span at Asp-146 to Phe-155 shows a compositional bias: polar residues. Phosphoserine is present on residues Ser-154 and Ser-200. Residues Ser-192 to Gln-211 show a composition bias toward low complexity. The residue at position 202 (Thr-202) is a Phosphothreonine. A Glycyl lysine isopeptide (Lys-Gly) (interchain with G-Cter in ubiquitin) cross-link involves residue Lys-247. Position 250 is a phosphoserine (Ser-250). Positions Asp-902 to Asn-962 constitute a Cullin neddylation domain. A Glycyl lysine isopeptide (Lys-Gly) (interchain with G-Cter in NEDD8) cross-link involves residue Lys-916.

It belongs to the cullin family. In terms of assembly, component of multiple DCX (DDB1-CUL4-X-box) E3 ubiquitin-protein ligase complexes that seem to be formed of DDB1, CUL4A or CUL4B, RBX1 and a variable substrate recognition component which seems to belong to a protein family described as DCAF (Ddb1- and Cul4-associated factor) or CDW (CUL4-DDB1-associated WD40-repeat) proteins. Component of the DCX(DTL) complex with the putative substrate recognition component DTL. Component of the DCX(DDB2) complex with the putative substrate recognition component DDB2. Component of DCX complexes part of the DesCEND (destruction via C-end degrons) pathway, which contain either TRPC4AP or DCAF12 as substrate-recognition component. Component of the DCX(AMBRA1) complex with the substrate recognition component AMBRA1. Part of a complex with RBX1 and TIP120A/CAND1. Component of the DCX(WDR77) complex, composed of Cul4b, Ddb1, Wdr77 and Rbx1. Interacts with RBX1, GRWD1, MLST8, SMU1, TLE2, TLE3, DCAF1, DDA1, DCAF6, DCAF17, DDB2, DCAF8, TIP120A/CAND1 and TMEM113. Interacts with cyclin E (CCNE1 or CCNE2) and with importins alpha-1 (KPNA2), alpha-3 (KPNA4), alpha-5 (KPNA1) and beta-1 (KPNB1). May interact with WDR26, WDR51B, SNRNP40, WDR61, WDR76 and WDR5. Interacts (unneddylated form) with DCUN1D1, DCUN1D2, DCUN1D3, DCUN1D4 and DCUN1D5; these interactions promote the cullin neddylation. Neddylated. Deneddylated via its interaction with the COP9 signalosome (CSN) complex. As to expression, expressed in oocytes (at protein level).

The protein resides in the cytoplasm. The protein localises to the nucleus. It functions in the pathway protein modification; protein ubiquitination. Its function is as follows. Core component of multiple cullin-RING-based E3 ubiquitin-protein ligase complexes which mediate the ubiquitination and subsequent proteasomal degradation of target proteins. The functional specificity of the E3 ubiquitin-protein ligase complex depends on the variable substrate recognition subunit. CUL4B may act within the complex as a scaffold protein, contributing to catalysis through positioning of the substrate and the ubiquitin-conjugating enzyme. Plays a role as part of the E3 ubiquitin-protein ligase complex in polyubiquitination of CDT1, histone H2A, histone H3 and histone H4 in response to radiation-induced DNA damage. Targeted to UV damaged chromatin by DDB2 and may be important for DNA repair and DNA replication. A number of DCX complexes (containing either TRPC4AP or DCAF12 as substrate-recognition component) are part of the DesCEND (destruction via C-end degrons) pathway, which recognizes a C-degron located at the extreme C terminus of target proteins, leading to their ubiquitination and degradation. The DCX(AMBRA1) complex is a master regulator of the transition from G1 to S cell phase by mediating ubiquitination of phosphorylated cyclin-D (CCND1, CCND2 and CCND3). The DCX(AMBRA1) complex also acts as a regulator of Cul5-RING (CRL5) E3 ubiquitin-protein ligase complexes by mediating ubiquitination and degradation of Elongin-C (ELOC) component of CRL5 complexes. Required for ubiquitination of cyclin E (CCNE1 or CCNE2), and consequently, normal G1 cell cycle progression. Component of the DCX(WDR77) complex, which mediates ubiquitination and degradation of Irgm1 in intestinal cells. Regulates the mammalian target-of-rapamycin (mTOR) pathway involved in control of cell growth, size and metabolism. Specific CUL4B regulation of the mTORC1-mediated pathway is dependent upon 26S proteasome function and requires interaction between CUL4B and MLST8. With CUL4A, contributes to ribosome biogenesis. The polypeptide is Cullin-4B (Mus musculus (Mouse)).